The primary structure comprises 303 residues: MTTIESKCSIDGILLLNKPQGMTSNAALQKAKHLFGAKKAGHTGSLDPLATGMLPLCFGEATKICQYLLNADKSYETIGRLGSKTNTADCTGEVIFCIENYTVSHEELIATLEKYKGKTKQIPSMFSALKHKGTPLYRLAREGIEIERKARDIVISQLKLEQFDGECFTLTVSCSKGTYIRNLVEDIGDTLKAGAHMTKLHRLYTAGFENNRMYTLDELQDMPLSQRLACLIPIDQAVQHLTPVILSDSEVTAIRQGKVISNKTSAVEGEDLRLYGEQSQFIGIGQALIHGDIKAKRLVSFAL.

Aspartate 47 (nucleophile) is an active-site residue.

Belongs to the pseudouridine synthase TruB family. Type 1 subfamily.

It carries out the reaction uridine(55) in tRNA = pseudouridine(55) in tRNA. In terms of biological role, responsible for synthesis of pseudouridine from uracil-55 in the psi GC loop of transfer RNAs. In Legionella pneumophila (strain Lens), this protein is tRNA pseudouridine synthase B.